The following is a 260-amino-acid chain: Putative ABC transporter ATP-binding protein SCO3161 (260 aa).

Residues 16–246 (LDVSGLAFAY…DDLMRAHRLE (231 aa)) form the ABC transporter domain. 49-56 (GPNGAGKT) is an ATP binding site.

It belongs to the ABC transporter superfamily.

The protein localises to the cell membrane. Probably part of an ABC transporter complex. Responsible for energy coupling to the transport system. This Streptomyces coelicolor (strain ATCC BAA-471 / A3(2) / M145) protein is Putative ABC transporter ATP-binding protein SCO3161.